The sequence spans 546 residues: CTP synthase (546 aa).

The tract at residues 1–267 is amidoligase domain; it reads MTKFIFVTGG…AEQVLDILQL (267 aa). Serine 13 is a binding site for CTP. Serine 13 contributes to the UTP binding site. 14–19 serves as a coordination point for ATP; it reads SIGKGI. An L-glutamine-binding site is contributed by tyrosine 54. Position 71 (aspartate 71) interacts with ATP. Residues aspartate 71 and glutamate 141 each contribute to the Mg(2+) site. CTP is bound by residues 148–150, 188–193, and lysine 224; these read DIE and KTKPTQ. UTP-binding positions include 188–193 and lysine 224; that span reads KTKPTQ. Residues 292 to 534 enclose the Glutamine amidotransferase type-1 domain; it reads EVAIVGKYVR…IKAALGSDLT (243 aa). Glycine 354 is an L-glutamine binding site. The Nucleophile; for glutamine hydrolysis role is filled by cysteine 381. L-glutamine contacts are provided by residues 382 to 385, glutamate 405, and arginine 462; that span reads LGMQ. Residues histidine 507 and glutamate 509 contribute to the active site.

The protein belongs to the CTP synthase family. Homotetramer.

The enzyme catalyses UTP + L-glutamine + ATP + H2O = CTP + L-glutamate + ADP + phosphate + 2 H(+). It catalyses the reaction L-glutamine + H2O = L-glutamate + NH4(+). The catalysed reaction is UTP + NH4(+) + ATP = CTP + ADP + phosphate + 2 H(+). The protein operates within pyrimidine metabolism; CTP biosynthesis via de novo pathway; CTP from UDP: step 2/2. Its activity is regulated as follows. Allosterically activated by GTP, when glutamine is the substrate; GTP has no effect on the reaction when ammonia is the substrate. The allosteric effector GTP functions by stabilizing the protein conformation that binds the tetrahedral intermediate(s) formed during glutamine hydrolysis. Inhibited by the product CTP, via allosteric rather than competitive inhibition. In terms of biological role, catalyzes the ATP-dependent amination of UTP to CTP with either L-glutamine or ammonia as the source of nitrogen. Regulates intracellular CTP levels through interactions with the four ribonucleotide triphosphates. The polypeptide is CTP synthase (Synechococcus sp. (strain ATCC 27144 / PCC 6301 / SAUG 1402/1) (Anacystis nidulans)).